Here is a 127-residue protein sequence, read N- to C-terminus: Large ribosomal subunit protein bL12 (127 aa).

The protein belongs to the bacterial ribosomal protein bL12 family. Homodimer. Part of the ribosomal stalk of the 50S ribosomal subunit. Forms a multimeric L10(L12)X complex, where L10 forms an elongated spine to which 2 to 4 L12 dimers bind in a sequential fashion. Binds GTP-bound translation factors.

Functionally, forms part of the ribosomal stalk which helps the ribosome interact with GTP-bound translation factors. Is thus essential for accurate translation. In Desulforapulum autotrophicum (strain ATCC 43914 / DSM 3382 / VKM B-1955 / HRM2) (Desulfobacterium autotrophicum), this protein is Large ribosomal subunit protein bL12.